The sequence spans 457 residues: Cysteine--tRNA ligase (457 aa).

Cysteine 28 is a binding site for Zn(2+). A 'HIGH' region motif is present at residues 30 to 40; the sequence is ITVYDLCHIGH. Zn(2+)-binding residues include cysteine 209, histidine 234, and glutamate 238. A 'KMSKS' region motif is present at residues 266–270; sequence KMSKS. Residue lysine 269 coordinates ATP.

This sequence belongs to the class-I aminoacyl-tRNA synthetase family. As to quaternary structure, monomer. The cofactor is Zn(2+).

It localises to the cytoplasm. The enzyme catalyses tRNA(Cys) + L-cysteine + ATP = L-cysteinyl-tRNA(Cys) + AMP + diphosphate. This is Cysteine--tRNA ligase from Sodalis glossinidius (strain morsitans).